The sequence spans 227 residues: PKHD-type hydroxylase Patl_2273 (227 aa).

A Fe2OG dioxygenase domain is found at 78–178 (KIYPPKFNRY…RTASFFWIES (101 aa)). Fe cation contacts are provided by histidine 96, aspartate 98, and histidine 159. Arginine 169 is a 2-oxoglutarate binding site.

The cofactor is Fe(2+). Requires L-ascorbate as cofactor.

This Pseudoalteromonas atlantica (strain T6c / ATCC BAA-1087) protein is PKHD-type hydroxylase Patl_2273.